The chain runs to 208 residues: Protein-L-isoaspartate O-methyltransferase (208 aa).

Serine 59 is a catalytic residue.

It belongs to the methyltransferase superfamily. L-isoaspartyl/D-aspartyl protein methyltransferase family.

It is found in the cytoplasm. The enzyme catalyses [protein]-L-isoaspartate + S-adenosyl-L-methionine = [protein]-L-isoaspartate alpha-methyl ester + S-adenosyl-L-homocysteine. In terms of biological role, catalyzes the methyl esterification of L-isoaspartyl residues in peptides and proteins that result from spontaneous decomposition of normal L-aspartyl and L-asparaginyl residues. It plays a role in the repair and/or degradation of damaged proteins. This is Protein-L-isoaspartate O-methyltransferase from Salmonella arizonae (strain ATCC BAA-731 / CDC346-86 / RSK2980).